The sequence spans 132 residues: Small ribosomal subunit protein uS8 (132 aa).

It belongs to the universal ribosomal protein uS8 family. In terms of assembly, part of the 30S ribosomal subunit. Contacts proteins S5 and S12.

Its function is as follows. One of the primary rRNA binding proteins, it binds directly to 16S rRNA central domain where it helps coordinate assembly of the platform of the 30S subunit. This chain is Small ribosomal subunit protein uS8, found in Brucella anthropi (strain ATCC 49188 / DSM 6882 / CCUG 24695 / JCM 21032 / LMG 3331 / NBRC 15819 / NCTC 12168 / Alc 37) (Ochrobactrum anthropi).